Consider the following 141-residue polypeptide: ATP synthase epsilon chain (141 aa).

The protein belongs to the ATPase epsilon chain family. As to quaternary structure, F-type ATPases have 2 components, CF(1) - the catalytic core - and CF(0) - the membrane proton channel. CF(1) has five subunits: alpha(3), beta(3), gamma(1), delta(1), epsilon(1). CF(0) has three main subunits: a, b and c.

The protein localises to the cell inner membrane. In terms of biological role, produces ATP from ADP in the presence of a proton gradient across the membrane. This Aromatoleum aromaticum (strain DSM 19018 / LMG 30748 / EbN1) (Azoarcus sp. (strain EbN1)) protein is ATP synthase epsilon chain.